The sequence spans 499 residues: Gypsy retrotransposon integrase-like protein 1 (499 aa).

In terms of domain architecture, Integrase catalytic spans K113–N270.

The sequence is that of Gypsy retrotransposon integrase-like protein 1 (GIN1) from Bos taurus (Bovine).